Reading from the N-terminus, the 558-residue chain is Serine/threonine-protein phosphatase 2B catalytic subunit (558 aa).

Fe cation contacts are provided by Asp-128, His-130, and Asp-156. Zn(2+) is bound by residues Asp-156 and Asn-188. Catalysis depends on His-189, which acts as the Proton donor. Zn(2+) contacts are provided by His-237 and His-319. 2 disordered regions span residues 415–439 (LRED…NQDP) and 534–558 (ALER…LSTS). The segment covering 420-435 (ATTSPGSASPALPSAA) has biased composition (low complexity). A compositionally biased stretch (basic and acidic residues) spans 534-548 (ALERATREADNDKKL). Polar residues predominate over residues 549–558 (QTLSRRLSTS).

Belongs to the PPP phosphatase family. PP-2B subfamily. In terms of assembly, composed of two components (A and B), the A component is the catalytic subunit and the B component confers calcium sensitivity. Fe(3+) serves as cofactor. Zn(2+) is required as a cofactor.

The enzyme catalyses O-phospho-L-seryl-[protein] + H2O = L-seryl-[protein] + phosphate. It carries out the reaction O-phospho-L-threonyl-[protein] + H2O = L-threonyl-[protein] + phosphate. Its function is as follows. Calcium-dependent, calmodulin-stimulated protein phosphatase. This subunit may have a role in the calmodulin activation of calcineurin. This is Serine/threonine-protein phosphatase 2B catalytic subunit (cna-1) from Neurospora crassa (strain ATCC 24698 / 74-OR23-1A / CBS 708.71 / DSM 1257 / FGSC 987).